A 385-amino-acid chain; its full sequence is Torsin-3A (385 aa).

The N-terminal stretch at M1–G21 is a signal peptide. N-linked (GlcNAc...) asparagine glycosylation is present at N110. G155–N162 serves as a coordination point for ATP.

Belongs to the ClpA/ClpB family. Torsin subfamily. Interacts with TOR1AIP1. In terms of processing, N-glycosylated.

Its subcellular location is the cytoplasm. It is found in the endoplasmic reticulum lumen. The sequence is that of Torsin-3A (Tor3a) from Mus musculus (Mouse).